Here is a 337-residue protein sequence, read N- to C-terminus: F420-dependent glucose-6-phosphate dehydrogenase (337 aa).

Aspartate 40 provides a ligand contact to coenzyme F420-(gamma-Glu)n. Histidine 41 (proton donor) is an active-site residue. Coenzyme F420-(gamma-Glu)n is bound by residues threonine 77 and 108 to 109 (TG). Glutamate 110 functions as the Proton acceptor in the catalytic mechanism. Coenzyme F420-(gamma-Glu)n contacts are provided by residues asparagine 113, 178–179 (GG), and 181–182 (VV). Threonine 196, lysine 199, lysine 260, and arginine 284 together coordinate substrate.

The protein belongs to the F420-dependent glucose-6-phosphate dehydrogenase family. Homodimer.

The catalysed reaction is oxidized coenzyme F420-(gamma-L-Glu)(n) + D-glucose 6-phosphate + H(+) = 6-phospho-D-glucono-1,5-lactone + reduced coenzyme F420-(gamma-L-Glu)(n). In terms of biological role, catalyzes the coenzyme F420-dependent oxidation of glucose 6-phosphate (G6P) to 6-phosphogluconolactone. This is F420-dependent glucose-6-phosphate dehydrogenase from Rhodococcus hoagii (strain 103S) (Rhodococcus equi).